Here is a 373-residue protein sequence, read N- to C-terminus: NADPH-dependent 3-keto-steroid reductase HSD3B3 (373 aa).

NADP(+) is bound by residues 10 to 15, Tyr155, and Lys159; that span reads GAGGFL. Residue Lys159 is the Proton donor of the active site. The chain crosses the membrane as a helical span at residues 288 to 308; sequence VALLYWFGFLLETVSFLLRPV.

Belongs to the 3-beta-HSD family. High levels in adrenal gland, kidney and male liver (at protein level). Low levels in female liver (at protein level). Expressed in ovaries (at protein level).

The protein localises to the endoplasmic reticulum membrane. Its subcellular location is the mitochondrion membrane. The enzyme catalyses a 3beta-hydroxysteroid + NADP(+) = a 3-oxosteroid + NADPH + H(+). The catalysed reaction is 5alpha-androstane-3beta,17beta-diol + NADP(+) = 17beta-hydroxy-5alpha-androstan-3-one + NADPH + H(+). The protein operates within steroid metabolism. Functionally, responsible for the reduction of the oxo group on the C-3 of 5alpha-androstane steroids. Catalyzes the conversion of dihydrotestosterone to its inactive form 5alpha-androstanediol, that does not bind androgen receptor/AR. Does not function as an isomerase. This Mesocricetus auratus (Golden hamster) protein is NADPH-dependent 3-keto-steroid reductase HSD3B3 (HSD3B3).